Here is a 77-residue protein sequence, read N- to C-terminus: Large ribosomal subunit protein uL29 (77 aa).

The protein belongs to the universal ribosomal protein uL29 family.

The chain is Large ribosomal subunit protein uL29 from Mycolicibacterium vanbaalenii (strain DSM 7251 / JCM 13017 / BCRC 16820 / KCTC 9966 / NRRL B-24157 / PYR-1) (Mycobacterium vanbaalenii).